Reading from the N-terminus, the 470-residue chain is Calcitonin gene-related peptide type 1 receptor (470 aa).

The signal sequence occupies residues 1-23; sequence MTASCWTICLFLLGSVTEFIVLA. The Extracellular segment spans residues 24-147; it reads SPEVNESQQQ…HTTEGRRTAM (124 aa). N-linked (GlcNAc...) asparagine glycosylation is found at N28, N74, N126, and N131. Disulfide bonds link C56-C82, C73-C113, and C96-C135. Residues 148 to 172 form a helical membrane-spanning segment; that stretch reads NLFYLALIGHGLSLTSLFISLGIFF. Residues 173–183 are Cytoplasmic-facing; sequence HFKSLSCQRIT. The chain crosses the membrane as a helical span at residues 184-206; that stretch reads LHKNLFFSFVLNSIITIIWLTAV. The Extracellular portion of the chain corresponds to 207-217; that stretch reads ANNQELVQQNP. A helical transmembrane segment spans residues 218 to 246; sequence ISCKISQFIHLYIFGCNYFWMLCEGIYLH. Over 247 to 260 the chain is Cytoplasmic; that stretch reads TLIVVAVFAEKQHL. A helical transmembrane segment spans residues 261–281; it reads MWYYLLGWGFPLIPATIHAVA. The Extracellular portion of the chain corresponds to 282–297; sequence RSYYYNDNCWISSNTS. The N-linked (GlcNAc...) asparagine glycan is linked to N295. The chain crosses the membrane as a helical span at residues 298 to 322; that stretch reads LLYIIHGPICAAMLVNLFFLLNIVR. Residues 323–337 lie on the Cytoplasmic side of the membrane; that stretch reads VLITKLKVTHQAKSS. Residues 338–359 traverse the membrane as a helical segment; that stretch reads LYMKAVRATLILVPLLGIQYVL. The Extracellular portion of the chain corresponds to 360–374; that stretch reads LPYKPSGRVSAEIYD. The chain crosses the membrane as a helical span at residues 375–395; it reads YIMHILMHYQGLLVATIFCFF. Residues 396–470 lie on the Cytoplasmic side of the membrane; that stretch reads NGEVQAVLRR…AIIKPENPFA (75 aa).

This sequence belongs to the G-protein coupled receptor 2 family.

The protein localises to the cell membrane. Functionally, may function as G protein-coupled receptor for calcitonin-gene-related peptides and adrenomedullin. Specificity may be modulated by accessory proteins. May activate cAMP-dependent pathway. The polypeptide is Calcitonin gene-related peptide type 1 receptor (calcrla) (Danio rerio (Zebrafish)).